The chain runs to 245 residues: Chromosome partition protein MukE (245 aa).

A disordered region spans residues 213 to 245 (PESIAAEKATADDESAVSNEEDFEYDDNQEGAE). The span at 224 to 245 (DDESAVSNEEDFEYDDNQEGAE) shows a compositional bias: acidic residues.

This sequence belongs to the MukE family. In terms of assembly, interacts, and probably forms a ternary complex, with MukF and MukB. The complex formation is stimulated by calcium or magnesium.

The protein resides in the cytoplasm. It is found in the nucleoid. Its function is as follows. Involved in chromosome condensation, segregation and cell cycle progression. May participate in facilitating chromosome segregation by condensation DNA from both sides of a centrally located replisome during cell division. Probably acts via its interaction with MukB and MukF. This Actinobacillus succinogenes (strain ATCC 55618 / DSM 22257 / CCUG 43843 / 130Z) protein is Chromosome partition protein MukE.